A 128-amino-acid chain; its full sequence is MREGDSGYFSCYDGNRFRLVILASQRAHELSSGACTAVARKGDKNTVVALREIVGEQLDLAAVFRLAVNRCRKYLEEFTNAREVAAARSSQAAPKSAPGQEIGKSFREKDPSAAAFLDQEQFFSGGGE.

A disordered region spans residues 87-106; sequence ARSSQAAPKSAPGQEIGKSF.

Belongs to the RNA polymerase subunit omega family. The RNAP catalytic core consists of 2 alpha, 1 beta, 1 beta' and 1 omega subunit. When a sigma factor is associated with the core the holoenzyme is formed, which can initiate transcription.

The enzyme catalyses RNA(n) + a ribonucleoside 5'-triphosphate = RNA(n+1) + diphosphate. Functionally, promotes RNA polymerase assembly. Latches the N- and C-terminal regions of the beta' subunit thereby facilitating its interaction with the beta and alpha subunits. This Anaplasma marginale (strain St. Maries) protein is DNA-directed RNA polymerase subunit omega.